Consider the following 352-residue polypeptide: [Citrate [pro-3S]-lyase] ligase (352 aa).

The N-acetyltransferase domain occupies 1-128 (MFGNDIFTRV…VMVLMENSAT (128 aa)).

It carries out the reaction holo-[citrate lyase ACP] + acetate + ATP = acetyl-[citrate lyase ACP] + AMP + diphosphate. Acetylation of prosthetic group (2-(5''-phosphoribosyl)-3'-dephosphocoenzyme-A) of the gamma subunit of citrate lyase. This chain is [Citrate [pro-3S]-lyase] ligase (citC), found in Escherichia coli (strain K12).